Consider the following 139-residue polypeptide: uncharacterized protein (139 aa).

The HTH cro/C1-type domain maps to 8–63; it reads LRELRRARKLTVNQLAVYSGISSATISKIENGKRGTPKPATIKKLAAVLKVPYENL. The segment at residues 19-38 is a DNA-binding region (H-T-H motif); the sequence is VNQLAVYSGISSATISKIEN.

This is an uncharacterized protein from Bacillus subtilis (strain 168).